A 599-amino-acid chain; its full sequence is NADH-ubiquinone oxidoreductase chain 5 (599 aa).

17 consecutive transmembrane segments (helical) span residues M1–F21, F41–L61, L79–E99, F114–M134, L137–G157, L166–F186, I198–G218, T237–I257, I269–L289, I297–Q317, L323–I343, M362–M382, I400–T420, L453–M473, M478–M498, M509–I529, and G578–M598.

Belongs to the complex I subunit 5 family.

Its subcellular location is the mitochondrion inner membrane. The enzyme catalyses a ubiquinone + NADH + 5 H(+)(in) = a ubiquinol + NAD(+) + 4 H(+)(out). In terms of biological role, core subunit of the mitochondrial membrane respiratory chain NADH dehydrogenase (Complex I) that is believed to belong to the minimal assembly required for catalysis. Complex I functions in the transfer of electrons from NADH to the respiratory chain. The immediate electron acceptor for the enzyme is believed to be ubiquinone. This Geomys personatus (Texas pocket gopher) protein is NADH-ubiquinone oxidoreductase chain 5 (ND5).